The following is a 551-amino-acid chain: Peptidyl-prolyl cis-trans isomerase-like 4 (551 aa).

A PPIase cyclophilin-type domain is found at 1–185 (MSVLLETSLG…RDIRIRHVVV (185 aa)). Residues 54-88 (GDPSNTGKGGASIWSQLPSTSQDSSTSTYFTPESS) form a disordered region. Residues 66–88 (IWSQLPSTSQDSSTSTYFTPESS) are compositionally biased toward polar residues. The 79-residue stretch at 262–340 (NILFVCKLNP…RRIWVDFSQS (79 aa)) folds into the RRM domain. Residues 352 to 551 (RNAGSDAPRA…RQRSRDGSRR (200 aa)) are disordered. Basic and acidic residues-rich tracts occupy residues 384-397 (KRGD…RDQP) and 408-454 (SRQD…SHRD). Over residues 455-464 (HERHHLSRHV) the composition is skewed to basic residues. A compositionally biased stretch (basic and acidic residues) spans 465–551 (RPSDEGESKC…RQRSRDGSRR (87 aa)).

This sequence belongs to the cyclophilin-type PPIase family. PPIL4 subfamily.

The protein resides in the nucleus. It catalyses the reaction [protein]-peptidylproline (omega=180) = [protein]-peptidylproline (omega=0). Its function is as follows. PPIases accelerate the folding of proteins. It catalyzes the cis-trans isomerization of proline imidic peptide bonds in oligopeptides. This chain is Peptidyl-prolyl cis-trans isomerase-like 4 (CYP6), found in Mycosarcoma maydis (Corn smut fungus).